The sequence spans 271 residues: MKRTDAPLVFAITSKGDDISNALAQKMKTYLLDFDLRYDEEEPDLVISVGGDGTLLYAFHRYCHRLDKTAFVGVHTGHLGFYADWVPEELEKLVIAIAKTPYQVVEYPLLEVTIRYLNGGSEAKYLALNECTVKCVSGTLVMDVEIRGDLFERFRGDGLCISTPTGSTAYNKALGGAILHPSLEAIQVTEMASINNRVFRTIGSPLVLPAHHTCLLKPVNHVDFQITIDHLSLLHKEVKSIQCRVADEKVRFARFRPFPFWRRVRDSFIAD.

Asp-52 (proton acceptor) is an active-site residue. NAD(+) is bound by residues 52–53, 129–130, Arg-155, Asp-157, and Ala-192; these read DG and NE.

The protein belongs to the NAD kinase family. A divalent metal cation is required as a cofactor.

Its subcellular location is the cytoplasm. The catalysed reaction is NAD(+) + ATP = ADP + NADP(+) + H(+). Its function is as follows. Involved in the regulation of the intracellular balance of NAD and NADP, and is a key enzyme in the biosynthesis of NADP. Catalyzes specifically the phosphorylation on 2'-hydroxyl of the adenosine moiety of NAD to yield NADP. The sequence is that of NAD kinase from Geobacillus stearothermophilus (Bacillus stearothermophilus).